Here is a 404-residue protein sequence, read N- to C-terminus: Caspase-1 (404 aa).

Residues 1 to 91 (MADKVLKEKR…YLAGTLGLSA (91 aa)) form the CARD domain. A propeptide spanning residues 1–119 (MADKVLKEKR…SFPAPQAVQD (119 aa)) is cleaved from the precursor. A Glycyl lysine isopeptide (Lys-Gly) (interchain with G-Cter in ubiquitin) cross-link involves residue lysine 134. Residues histidine 237 and cysteine 285 contribute to the active site. The propeptide at 298–316 (SVGVSGNLSLPTTEEFEDD) is interdomain linker. Serine 302 is subject to Phosphoserine.

It belongs to the peptidase C14A family. As to quaternary structure, heterotetramer that consists of two anti-parallel arranged heterodimers, each one formed by a 20 kDa (Caspase-1 subunit p20) and a 10 kDa (Caspase-1 subunit p10) subunit. May be a component of the inflammasome, a protein complex which also includes PYCARD, CARD8 and NLRP2 and whose function would be the activation of pro-inflammatory caspases. Component of the AIM2 PANoptosome complex, a multiprotein complex that drives inflammatory cell death (PANoptosis). Interacts with CARD8; interacts with the released C-terminus of CARD8 which forms an inflammasome and directly activates CASP1 to promote pyroptosis. Both the p10 and p20 subunits interact with MEFV. Interacts with CARD17P/INCA and CARD18. Interacts with SERPINB1; this interaction regulates CASP1 activity. Heterotetramer that consists of two anti-parallel arranged heterodimers, each one formed by a 20 kDa (Caspase-1 subunit p20) and a 10 kDa (Caspase-1 subunit p10) subunit. Can form a heterodimer with isoform epsilon which then has an inhibitory effect. In terms of assembly, heterotetramer that consists of two anti-parallel arranged heterodimers, each one formed by a 20 kDa (Caspase-1 subunit p20) and a 10 kDa (Caspase-1 subunit p10) subunit. As to quaternary structure, can form a heterodimer with Caspase-1 subunit p20 which then has an inhibitory effect. In terms of processing, the two subunits are derived from the precursor sequence by an autocatalytic mechanism. Ubiquitinated via 'Lys-11'-linked polyubiquitination. Deubiquitinated by USP8. Post-translationally, cleavage in the interdomain linker region is required to induce pyroptosis. Expressed in larger amounts in spleen and lung. Detected in liver, heart, small intestine, colon, thymus, prostate, skeletal muscle, peripheral blood leukocytes, kidney and testis. No expression in the brain.

It localises to the cytoplasm. The protein localises to the cell membrane. The catalysed reaction is Strict requirement for an Asp residue at position P1 and has a preferred cleavage sequence of Tyr-Val-Ala-Asp-|-.. Its activity is regulated as follows. (Microbial infection) Specifically inhibited by the cowpox virus Crma protein. Its function is as follows. Thiol protease involved in a variety of inflammatory processes by proteolytically cleaving other proteins, such as the precursors of the inflammatory cytokines interleukin-1 beta (IL1B) and interleukin 18 (IL18) as well as the pyroptosis inducer Gasdermin-D (GSDMD), into active mature peptides. Plays a key role in cell immunity as an inflammatory response initiator: once activated through formation of an inflammasome complex, it initiates a pro-inflammatory response through the cleavage of the two inflammatory cytokines IL1B and IL18, releasing the mature cytokines which are involved in a variety of inflammatory processes. Cleaves a tetrapeptide after an Asp residue at position P1. Also initiates pyroptosis, a programmed lytic cell death pathway, through cleavage of GSDMD. In contrast to cleavage of interleukin IL1B, recognition and cleavage of GSDMD is not strictly dependent on the consensus cleavage site but depends on an exosite interface on CASP1 that recognizes and binds the Gasdermin-D, C-terminal (GSDMD-CT) part. Cleaves and activates CASP7 in response to bacterial infection, promoting plasma membrane repair. Upon inflammasome activation, during DNA virus infection but not RNA virus challenge, controls antiviral immunity through the cleavage of CGAS, rendering it inactive. In apoptotic cells, cleaves SPHK2 which is released from cells and remains enzymatically active extracellularly. Functionally, apoptosis inactive. This chain is Caspase-1 (CASP1), found in Homo sapiens (Human).